We begin with the raw amino-acid sequence, 562 residues long: MOB kinase activator-like 2 (562 aa).

Positions 30–50 (KSGSVQGTTATATATGPPSPP) are disordered. A compositionally biased stretch (low complexity) spans 31–45 (SGSVQGTTATATATG). The Zn(2+) site is built by C170, C175, H250, and H255. Disordered regions lie at residues 304–378 (DDTS…TASA), 468–523 (NFSN…STTV), and 538–562 (GASA…SSTA). Low complexity-rich tracts occupy residues 305–349 (DTSG…NSTS), 357–378 (NSQS…TASA), and 471–481 (NNNNNNHNLNH). Over residues 482–514 (LNHHHHHHHHQHHHQHHPHGHHGHQGHQGHQGH) the composition is skewed to basic residues. A compositionally biased stretch (low complexity) spans 547–562 (AVSAATGGATSASSTA).

This sequence belongs to the MOB1/phocein family. As to quaternary structure, interacts with and activates trc, also interacts with wts.

It is found in the cytoplasm. Its subcellular location is the nucleus. In terms of biological role, required for the normal morphogenesis of a variety of polarized outgrowths including epidermal hairs, bristles, arista laterals, and dendrites. The polypeptide is MOB kinase activator-like 2 (Drosophila pseudoobscura pseudoobscura (Fruit fly)).